Reading from the N-terminus, the 91-residue chain is DNA-directed RNA polymerase subunit omega (91 aa).

This sequence belongs to the RNA polymerase subunit omega family. As to quaternary structure, the RNAP catalytic core consists of 2 alpha, 1 beta, 1 beta' and 1 omega subunit. When a sigma factor is associated with the core the holoenzyme is formed, which can initiate transcription.

The enzyme catalyses RNA(n) + a ribonucleoside 5'-triphosphate = RNA(n+1) + diphosphate. Its function is as follows. Promotes RNA polymerase assembly. Latches the N- and C-terminal regions of the beta' subunit thereby facilitating its interaction with the beta and alpha subunits. In Actinobacillus pleuropneumoniae serotype 5b (strain L20), this protein is DNA-directed RNA polymerase subunit omega.